The following is a 180-amino-acid chain: ATP-dependent protease subunit HslV (180 aa).

Threonine 5 is an active-site residue. The Na(+) site is built by glycine 161, cysteine 164, and threonine 167.

This sequence belongs to the peptidase T1B family. HslV subfamily. As to quaternary structure, a double ring-shaped homohexamer of HslV is capped on each side by a ring-shaped HslU homohexamer. The assembly of the HslU/HslV complex is dependent on binding of ATP.

Its subcellular location is the cytoplasm. The enzyme catalyses ATP-dependent cleavage of peptide bonds with broad specificity.. Allosterically activated by HslU binding. Its function is as follows. Protease subunit of a proteasome-like degradation complex believed to be a general protein degrading machinery. In Campylobacter lari (strain RM2100 / D67 / ATCC BAA-1060), this protein is ATP-dependent protease subunit HslV.